Here is a 322-residue protein sequence, read N- to C-terminus: Thioredoxin reductase (322 aa).

Residues 12 to 15 (SGPA), 34 to 42 (EGAVTAGGA), Asn51, and Val84 contribute to the FAD site. Cysteines 136 and 139 form a disulfide. Positions 176, 182, and 259 each coordinate NADP(+). FAD is bound by residues Asp279 and 286–289 (RQAI). NADP(+) is bound at residue Arg286.

This sequence belongs to the class-II pyridine nucleotide-disulfide oxidoreductase family. In terms of assembly, homodimer. FAD is required as a cofactor.

The enzyme catalyses [thioredoxin]-dithiol + NADP(+) = [thioredoxin]-disulfide + NADPH + H(+). In terms of biological role, component of the thioredoxin-thioredoxin reductase system which may be involved in biosynthesis of penicillins and cephalosporins and may be important in determining the thiol-disulfide redox balance. The polypeptide is Thioredoxin reductase (Streptomyces clavuligerus).